The primary structure comprises 364 residues: GDP-perosamine synthase (364 aa).

An N6-(pyridoxal phosphate)lysine modification is found at lysine 183.

This sequence belongs to the DegT/DnrJ/EryC1 family. Homodecamer. It depends on pyridoxal 5'-phosphate as a cofactor.

The catalysed reaction is GDP-alpha-D-perosamine + 2-oxoglutarate = GDP-4-dehydro-alpha-D-rhamnose + L-glutamate. It functions in the pathway bacterial outer membrane biogenesis; LPS O-antigen biosynthesis. Divalent ions have no significant effect on activity. Functionally, catalyzes the synthesis of GDP-perosamine from GDP-4-keto-6-deoxy-D-mannose and L-glutamate. Can use only L-glutamate as amino donor. This is GDP-perosamine synthase from Escherichia coli O157:H7.